The sequence spans 223 residues: Putative synaptogyrin-2 like protein (223 aa).

Residue methionine 1 is modified to N-acetylmethionine. Serine 3 bears the Phosphoserine mark. An MARVEL domain is found at 20 to 170 (FLTQPQVVAR…LASLTYQRYK (151 aa)). A run of 4 helical transmembrane segments spans residues 26–46 (VVARALCLVFALIVFSCIYGE), 71–91 (GSAIGVLAFLASAFLVVDAYF), 104–124 (VIGDLLFSALWTFLWFVGFCF), and 146–166 (AAITFSFFSIFSWGVLASLTY). Residues 197–223 (ASVDNYQQPPFTQNAETTEGYQPPPVY) are disordered. Positions 200–216 (DNYQQPPFTQNAETTEG) are enriched in polar residues.

This sequence belongs to the synaptogyrin family.

Its subcellular location is the membrane. The polypeptide is Putative synaptogyrin-2 like protein (Homo sapiens (Human)).